The following is a 759-amino-acid chain: 1,4-alpha-glucan branching enzyme GlgB (759 aa).

Asp-431 acts as the Nucleophile in catalysis. Glu-484 functions as the Proton donor in the catalytic mechanism.

Belongs to the glycosyl hydrolase 13 family. GlgB subfamily. Monomer.

The enzyme catalyses Transfers a segment of a (1-&gt;4)-alpha-D-glucan chain to a primary hydroxy group in a similar glucan chain.. It participates in glycan biosynthesis; glycogen biosynthesis. Catalyzes the formation of the alpha-1,6-glucosidic linkages in glycogen by scission of a 1,4-alpha-linked oligosaccharide from growing alpha-1,4-glucan chains and the subsequent attachment of the oligosaccharide to the alpha-1,6 position. The sequence is that of 1,4-alpha-glucan branching enzyme GlgB from Prochlorococcus marinus (strain MIT 9211).